A 407-amino-acid polypeptide reads, in one-letter code: Steroid 3-ketoacyl-CoA thiolase FadA6 (407 aa).

Cys-110 serves as the catalytic Acyl-thioester intermediate. Residues Gln-178, 237-239 (RES), and Ser-262 each bind CoA. Residues His-363 and Cys-393 each act as proton acceptor in the active site. A substrate-binding site is contributed by Gly-395.

Belongs to the thiolase-like superfamily. Thiolase family.

It catalyses the reaction an acyl-CoA + acetyl-CoA = a 3-oxoacyl-CoA + CoA. It carries out the reaction 6-methyl-3,7-dioxodecanedioyl-CoA + CoA = 4-methyl-5-oxo-octanedioyl-CoA + acetyl-CoA. The protein operates within steroid metabolism; cholesterol degradation. Its function is as follows. May be involved in the final steps of cholesterol and steroid degradation. Catalyzes the formation of 4-methyl-5-oxo-octanedioyl-CoA (MOODA-CoA) and acetyl-CoA from 6-methyl-3,7-dioxodecanedioyl-CoA (MeDODA-CoA) and coenzyme A. The protein is Steroid 3-ketoacyl-CoA thiolase FadA6 of Mycobacterium tuberculosis (strain ATCC 25618 / H37Rv).